Consider the following 279-residue polypeptide: Putative ABC transporter ATP-binding protein GSU3001 (279 aa).

Residues 1–237 (MRFSVDLKAY…PAEMESVKLR (237 aa)) enclose the ABC transporter domain. 36-43 (GSNGSGKT) is a binding site for ATP.

It belongs to the ABC transporter superfamily.

Its subcellular location is the cell inner membrane. Probably part of an ABC transporter complex. Responsible for energy coupling to the transport system. This Geobacter sulfurreducens (strain ATCC 51573 / DSM 12127 / PCA) protein is Putative ABC transporter ATP-binding protein GSU3001.